A 355-amino-acid polypeptide reads, in one-letter code: Peptide chain release factor 1 (355 aa).

Q233 is subject to N5-methylglutamine. The segment covering 280–293 has biased composition (basic and acidic residues); sequence KRRQKEQERSDSRR. The segment at 280-310 is disordered; sequence KRRQKEQERSDSRRGQVGSGDRSERIRTYNF.

This sequence belongs to the prokaryotic/mitochondrial release factor family. Methylated by PrmC. Methylation increases the termination efficiency of RF1.

The protein localises to the cytoplasm. Peptide chain release factor 1 directs the termination of translation in response to the peptide chain termination codons UAG and UAA. In Rickettsia prowazekii (strain Madrid E), this protein is Peptide chain release factor 1 (prfA).